Reading from the N-terminus, the 158-residue chain is NAD(P)H-quinone oxidoreductase subunit N (158 aa).

The protein belongs to the complex I NdhN subunit family. NDH-1 can be composed of about 15 different subunits; different subcomplexes with different compositions have been identified which probably have different functions.

The protein resides in the cellular thylakoid membrane. It catalyses the reaction a plastoquinone + NADH + (n+1) H(+)(in) = a plastoquinol + NAD(+) + n H(+)(out). The catalysed reaction is a plastoquinone + NADPH + (n+1) H(+)(in) = a plastoquinol + NADP(+) + n H(+)(out). Functionally, NDH-1 shuttles electrons from an unknown electron donor, via FMN and iron-sulfur (Fe-S) centers, to quinones in the respiratory and/or the photosynthetic chain. The immediate electron acceptor for the enzyme in this species is believed to be plastoquinone. Couples the redox reaction to proton translocation, and thus conserves the redox energy in a proton gradient. Cyanobacterial NDH-1 also plays a role in inorganic carbon-concentration. The chain is NAD(P)H-quinone oxidoreductase subunit N from Prochlorococcus marinus (strain AS9601).